The primary structure comprises 908 residues: Translation initiation factor IF-2 (908 aa).

Disordered stretches follow at residues 123–154 (EEPPILQPELPTEEKEELEVIESPQAPQEELK) and 212–278 (KKEP…VSEK). Positions 407–577 (ERAPIVTIMG…LFEAELLELK (171 aa)) constitute a tr-type G domain. The tract at residues 416–423 (GHVDHGKT) is G1. 416-423 (GHVDHGKT) is a GTP binding site. The tract at residues 441-445 (GITQH) is G2. Positions 463-466 (DTPG) are G3. GTP is bound by residues 463–467 (DTPGH) and 517–520 (NKMD). A G4 region spans residues 517–520 (NKMD). The tract at residues 553–555 (SAI) is G5.

The protein belongs to the TRAFAC class translation factor GTPase superfamily. Classic translation factor GTPase family. IF-2 subfamily.

The protein localises to the cytoplasm. Its function is as follows. One of the essential components for the initiation of protein synthesis. Protects formylmethionyl-tRNA from spontaneous hydrolysis and promotes its binding to the 30S ribosomal subunits. Also involved in the hydrolysis of GTP during the formation of the 70S ribosomal complex. The protein is Translation initiation factor IF-2 of Amoebophilus asiaticus (strain 5a2).